The primary structure comprises 351 residues: MNLSFRWYGADDAVKLQYIRQIPSIKSIVTAIYDVPVGEKWSIEAILKLKNEVESYGLNFDVIESVPVHEDIKLGLKTRDKYIENYKENIRNLSKAGVKVICYNFMPIFDWTRTQVDKVLDDGSTTLVYYKNQLKKMDPLTGELSLPGWDSSYTKDQLSSLFEKYQNVDQEVLWSNLEYFLKQIIPVAEECDVKMAIHPDDPPYNIFGLPRIITNEQNLDRFLKIVDSKYNGLTFCTGSLGCASFNDVVKMVDKYSSQGRIHFMHVRNVKLLFDGSFEESAHYSPCGSLDIVEIMKVLHKNKFDGYIRPDHGRMIWGETGRPGYGLYDRALGAMYITGIWETLEKISKEDK.

This sequence belongs to the mannonate dehydratase family. The cofactor is Fe(2+). Mn(2+) serves as cofactor.

It catalyses the reaction D-mannonate = 2-dehydro-3-deoxy-D-gluconate + H2O. It participates in carbohydrate metabolism; pentose and glucuronate interconversion. Its function is as follows. Catalyzes the dehydration of D-mannonate. In Clostridium acetobutylicum (strain ATCC 824 / DSM 792 / JCM 1419 / IAM 19013 / LMG 5710 / NBRC 13948 / NRRL B-527 / VKM B-1787 / 2291 / W), this protein is Mannonate dehydratase.